The primary structure comprises 384 residues: MLASYASDPLKSRGRLYKEIPTYYRNEFERDRDRIIHTNAFRRLQYKTQVFINHEEGDHYRNRLTHSLEVATVARSVANTLNLSSDLAETIALAHDLGHTPFGHVGEKALNECMKEYNGFSHNSQSLKILTLLEKRYAAYNGVNLTWEVLEGIVKHNGPILGAINEYVAEYNKQNDLELNTYASAEAQIASLADDISYISHDLEDSIIAKIIDFNNLAELQYIDNYVFKLKSKFKDISPSCLIYEIVRKLIHELITDLLLQTKENLKKEKITNINEIRNLHYQIVDFTEKTNERINETKKFLHKRVYESNKMIAISIKCTKIVQGLFKIYMDDINLLPTNWKILIDSNETYSKARVIADYIAGMTDRFAIQEYNQLCAPKFNKI.

One can recognise an HD domain in the interval 63–199; that stretch reads RLTHSLEVAT…ASLADDISYI (137 aa).

Belongs to the dGTPase family. Type 2 subfamily.

This chain is Deoxyguanosinetriphosphate triphosphohydrolase-like protein, found in Rickettsia typhi (strain ATCC VR-144 / Wilmington).